A 450-amino-acid polypeptide reads, in one-letter code: Saccharopine dehydrogenase [NADP(+), L-glutamate-forming] (450 aa).

NADP(+) contacts are provided by residues 9-12, 32-34, 54-55, isoleucine 75, 97-98, 124-126, and serine 174; these read SGFV, CRT, DV, TS, and VDP. L-saccharopine is bound by residues 98 to 99 and aspartate 125; that span reads SY. Residues arginine 223 and 244–246 contribute to the L-saccharopine site; that span reads TLR.

The protein belongs to the saccharopine dehydrogenase family. In terms of assembly, homodimer.

Its subcellular location is the cytoplasm. It carries out the reaction L-saccharopine + NADP(+) + H2O = (S)-2-amino-6-oxohexanoate + L-glutamate + NADPH + H(+). It functions in the pathway amino-acid biosynthesis; L-lysine biosynthesis via AAA pathway; L-lysine from L-alpha-aminoadipate (fungal route): step 2/3. The chain is Saccharopine dehydrogenase [NADP(+), L-glutamate-forming] from Schizosaccharomyces pombe (strain 972 / ATCC 24843) (Fission yeast).